A 195-amino-acid chain; its full sequence is MALNGPQKTVVQLVGVVVLMGGLAWASVPFYDWFCRVTGFGGVTQVAETGSDQVLDQTIKVRFDASKDRGMPWEFKPVERIMELKIGETGLAFYEAYNPTDRPVAGQASYNVAPFSAGYYFDKIQCFCFNEQVLQPGERVMMPVTFFVDPEIIEDPEAKYVHTITLSYTFHEIDLPEGYAALDTGDTSGAETELN.

At 1–9 (MALNGPQKT) the chain is on the cytoplasmic side. The helical; Signal-anchor for type II membrane protein transmembrane segment at 10-30 (VVQLVGVVVLMGGLAWASVPF) threads the bilayer. The Periplasmic segment spans residues 31–195 (YDWFCRVTGF…DTSGAETELN (165 aa)).

It belongs to the COX11/CtaG family.

It is found in the cell inner membrane. Exerts its effect at some terminal stage of cytochrome c oxidase synthesis, probably by being involved in the insertion of the copper B into subunit I. In Ruegeria sp. (strain TM1040) (Silicibacter sp.), this protein is Cytochrome c oxidase assembly protein CtaG.